The following is a 414-amino-acid chain: EARP and GARP complex-interacting protein 1 (414 aa).

Met1 bears the N-acetylmethionine mark. WD repeat units lie at residues 159-199, 209-249, 253-293, and 297-337; these read TAHG…SQAV, KGQL…QIYC, AHGQ…EPVK, and EHSH…SEPF. The segment at 337–362 is disordered; it reads FGHLVDDDDISDQEDHRSEEKSKEPL. Ser347 is subject to Phosphoserine. Residues 349-362 are compositionally biased toward basic and acidic residues; it reads QEDHRSEEKSKEPL. A WD 5 repeat occupies 372–412; it reads EHEDSVYAVDWSSADPWLFASLSYDGRLVINRVPRALKYHI.

The protein belongs to the WD repeat EIPR1 family. In terms of assembly, interacts with two multisubunit tethering complexes: EARP composed of VPS50, VPS51, VPS52 and VPS53 subunits and GARP complex composed of VPS51, VPS52, VPS53 and VPS54 subunits. Interacts with SNAP29.

It is found in the golgi apparatus. The protein localises to the trans-Golgi network. Functionally, acts as a component of endosomal retrieval machinery that is involved in protein transport from early endosomes to either recycling endosomes or the trans-Golgi network. Mediates the recruitment of Golgi-associated retrograde protein (GARP) complex to the trans-Golgi network and controls early endosome-to-Golgi transport of internalized protein. Promotes the recycling of internalized transferrin receptor (TFRC) to the plasma membrane through interaction with endosome-associated recycling protein (EARP) complex. Controls proper insulin distribution and secretion, and retention of cargo in mature dense core vesicles. Required for the stability of the endosome-associated retrograde protein (EARP) complex subunits and for proper localization and association of EARP with membranes. In Pongo abelii (Sumatran orangutan), this protein is EARP and GARP complex-interacting protein 1.